The following is a 191-amino-acid chain: Glutathione-independent glyoxalase DJ-1 (191 aa).

Residues glutamate 16, cysteine 111, and histidine 130 contribute to the active site.

It belongs to the peptidase C56 family.

It is found in the cytoplasm. The protein resides in the nucleus. The catalysed reaction is methylglyoxal + H2O = (R)-lactate + H(+). Functionally, catalyzes the conversion of methylglyoxal (MG) to D-lactate in a single glutathione (GSH)-independent step. May play a role in detoxifying endogenously produced glyoxals. Involved in protection against reactive oxygen species (ROS). This chain is Glutathione-independent glyoxalase DJ-1, found in Schizosaccharomyces pombe (strain 972 / ATCC 24843) (Fission yeast).